Reading from the N-terminus, the 447-residue chain is Trigger factor (447 aa).

The PPIase FKBP-type domain occupies 159 to 244; that stretch reads GDMLLMQVES…VREIKEEKLP (86 aa).

This sequence belongs to the FKBP-type PPIase family. Tig subfamily.

It localises to the cytoplasm. The enzyme catalyses [protein]-peptidylproline (omega=180) = [protein]-peptidylproline (omega=0). Involved in protein export. Acts as a chaperone by maintaining the newly synthesized protein in an open conformation. Functions as a peptidyl-prolyl cis-trans isomerase. The sequence is that of Trigger factor from Dehalococcoides mccartyi (strain CBDB1).